The chain runs to 296 residues: Glycine--tRNA ligase alpha subunit (296 aa).

The protein belongs to the class-II aminoacyl-tRNA synthetase family. In terms of assembly, tetramer of two alpha and two beta subunits.

Its subcellular location is the cytoplasm. It catalyses the reaction tRNA(Gly) + glycine + ATP = glycyl-tRNA(Gly) + AMP + diphosphate. The sequence is that of Glycine--tRNA ligase alpha subunit from Listeria monocytogenes serotype 4b (strain CLIP80459).